A 149-amino-acid chain; its full sequence is Transcriptional repressor NrdR (149 aa).

A zinc finger spans residues 3–34 (CPFCQSDDTKVLDTRLIDDGSQVRRRRECVSC). An ATP-cone domain is found at 49 to 139 (PHLIKSDDSR…VYRQFQDIEA (91 aa)).

It belongs to the NrdR family. Zn(2+) serves as cofactor.

Its function is as follows. Negatively regulates transcription of bacterial ribonucleotide reductase nrd genes and operons by binding to NrdR-boxes. The sequence is that of Transcriptional repressor NrdR from Ruthia magnifica subsp. Calyptogena magnifica.